We begin with the raw amino-acid sequence, 374 residues long: Golgi-associated kinase 1B (374 aa).

At 1–38 (MSPDRTGRGSSSSSSSLKRLVCKSFVRAWGRRRPNLRR) the chain is on the cytoplasmic side. A helical; Signal-anchor for type II membrane protein membrane pass occupies residues 39-61 (AVLLICTASAIYGIVIASQVLRG). Over 62-374 (STHPGKALRK…LLQVYTRLDR (313 aa)) the chain is Extracellular. The segment covering 136–146 (VRPKKRRKYGA) has biased composition (basic residues). Residues 136–177 (VRPKKRRKYGARRPGVVQDTESKKDTLWSKVPNSQHKSQAQS) form a disordered region. Residues 166–177 (VPNSQHKSQAQS) show a composition bias toward polar residues. Residues N281 and N314 are each glycosylated (N-linked (GlcNAc...) asparagine).

This sequence belongs to the GASK family.

The protein resides in the golgi apparatus membrane. The chain is Golgi-associated kinase 1B from Xenopus laevis (African clawed frog).